A 534-amino-acid chain; its full sequence is Apolipoprotein N-acyltransferase (534 aa).

7 consecutive transmembrane segments (helical) span residues 8-28 (VILV…AFAV), 31-51 (LPPF…VWLI), 69-89 (AFAV…WWLG), 105-125 (LAIL…VALA), 127-147 (IFWS…GLME), 178-198 (VIGA…PALF), and 208-228 (VALA…ALYL). A CN hydrolase domain is found at 246–496 (VQPDIDQAAK…TGFIDATVDS (251 aa)). Glutamate 291 (proton acceptor) is an active-site residue. The active site involves lysine 355. Cysteine 408 serves as the catalytic Nucleophile. The helical transmembrane segment at 511–531 (FWLTEALLILIALISREGFIF) threads the bilayer.

It belongs to the CN hydrolase family. Apolipoprotein N-acyltransferase subfamily.

It is found in the cell inner membrane. It catalyses the reaction N-terminal S-1,2-diacyl-sn-glyceryl-L-cysteinyl-[lipoprotein] + a glycerophospholipid = N-acyl-S-1,2-diacyl-sn-glyceryl-L-cysteinyl-[lipoprotein] + a 2-acyl-sn-glycero-3-phospholipid + H(+). It participates in protein modification; lipoprotein biosynthesis (N-acyl transfer). Its function is as follows. Catalyzes the phospholipid dependent N-acylation of the N-terminal cysteine of apolipoprotein, the last step in lipoprotein maturation. In Rhizobium etli (strain CIAT 652), this protein is Apolipoprotein N-acyltransferase.